The primary structure comprises 70 residues: ATP synthase subunit c (70 aa).

The next 2 membrane-spanning stretches (helical) occupy residues 4 to 24 and 48 to 68; these read IAAG…NGML and ISMA…FVLI.

This sequence belongs to the ATPase C chain family. In terms of assembly, F-type ATPases have 2 components, F(1) - the catalytic core - and F(0) - the membrane proton channel. F(1) has five subunits: alpha(3), beta(3), gamma(1), delta(1), epsilon(1). F(0) has three main subunits: a(1), b(2) and c(10-14). The alpha and beta chains form an alternating ring which encloses part of the gamma chain. F(1) is attached to F(0) by a central stalk formed by the gamma and epsilon chains, while a peripheral stalk is formed by the delta and b chains.

It localises to the cell membrane. Functionally, f(1)F(0) ATP synthase produces ATP from ADP in the presence of a proton or sodium gradient. F-type ATPases consist of two structural domains, F(1) containing the extramembraneous catalytic core and F(0) containing the membrane proton channel, linked together by a central stalk and a peripheral stalk. During catalysis, ATP synthesis in the catalytic domain of F(1) is coupled via a rotary mechanism of the central stalk subunits to proton translocation. In terms of biological role, key component of the F(0) channel; it plays a direct role in translocation across the membrane. A homomeric c-ring of between 10-14 subunits forms the central stalk rotor element with the F(1) delta and epsilon subunits. The chain is ATP synthase subunit c from Oenococcus oeni (strain ATCC BAA-331 / PSU-1).